The chain runs to 728 residues: Probable LRR receptor-like serine/threonine-protein kinase At1g14390 (728 aa).

The N-terminal stretch at 1–27 is a signal peptide; the sequence is MHSSSKSQAFSLTFLLFLFLLPSVSES. Residues 28 to 356 lie on the Extracellular side of the membrane; that stretch reads QLISSESRTL…EEDTGIELGL (329 aa). Asn-55 and Asn-85 each carry an N-linked (GlcNAc...) asparagine glycan. LRR repeat units follow at residues 74-96, 106-130, 131-155, 157-178, 179-202, 204-224, 225-248, 249-272, and 274-295; these read NGHV…RFSS, LSNL…IIRL, SSSL…ISSL, NLRS…LRGL, SNLQ…LASN, ITIS…IKKL, NKLQ…LLSL, PSLQ…SLCN, and KLRI…CFSS. Asn-138 and Asn-169 each carry an N-linked (GlcNAc...) asparagine glycan. N-linked (GlcNAc...) asparagine glycosylation is present at Asn-210. Residues Asn-253 and Asn-267 are each glycosylated (N-linked (GlcNAc...) asparagine). The helical transmembrane segment at 357 to 377 threads the bilayer; sequence VIGIIIGVILVSAVLAGLVLV. The Cytoplasmic segment spans residues 378–728; the sequence is RMRKSRSKEE…ENLGLGGSEL (351 aa). One can recognise a Protein kinase domain in the interval 421–709; it reads TMRSAVIGLS…DVVWNLQYTI (289 aa).

This sequence belongs to the protein kinase superfamily. Ser/Thr protein kinase family.

Its subcellular location is the membrane. The catalysed reaction is L-seryl-[protein] + ATP = O-phospho-L-seryl-[protein] + ADP + H(+). It catalyses the reaction L-threonyl-[protein] + ATP = O-phospho-L-threonyl-[protein] + ADP + H(+). This Arabidopsis thaliana (Mouse-ear cress) protein is Probable LRR receptor-like serine/threonine-protein kinase At1g14390.